A 415-amino-acid chain; its full sequence is Maintenance of mitochondrial morphology protein 1 (415 aa).

The Lumenal portion of the chain corresponds to 1 to 18 (MADICPSRSEPTLSFTQG). A helical transmembrane segment spans residues 19–39 (LILGQLSVVLLLAAFIKFFIF). The Cytoplasmic portion of the chain corresponds to 40-415 (GDPPSPEVVA…MPGSMPGSMP (376 aa)). The SMP-LTD domain occupies 114–330 (QPESLDWFNV…EPRFQEIALP (217 aa)). The span at 373 to 389 (IEAEAHGGADRVPDSLR) shows a compositional bias: basic and acidic residues. The interval 373 to 415 (IEAEAHGGADRVPDSLRYRHRPRADEEFPGAGSMPGSMPGSMP) is disordered. The segment covering 404 to 415 (GSMPGSMPGSMP) has biased composition (low complexity).

It belongs to the MMM1 family. Homodimer. Component of the ER-mitochondria encounter structure (ERMES) or MDM complex, composed of mmm-1, mdm10, mdm12 and mdm34. A mmm-1 homodimer associates with one molecule of mdm12 on each side in a pairwise head-to-tail manner, and the SMP-LTD domains of mmm-1 and mdm12 generate a continuous hydrophobic tunnel for phospholipid trafficking.

The protein localises to the endoplasmic reticulum membrane. Component of the ERMES/MDM complex, which serves as a molecular tether to connect the endoplasmic reticulum (ER) and mitochondria. Components of this complex are involved in the control of mitochondrial shape and protein biogenesis, and function in nonvesicular lipid trafficking between the ER and mitochondria. The mdm12-mmm-1 subcomplex functions in the major beta-barrel assembly pathway that is responsible for biogenesis of all outer membrane beta-barrel proteins, and acts in a late step after the SAM complex. The mdm10-mdm12-mmm-1 subcomplex further acts in the TOM40-specific pathway after the action of the mdm12-mmm-1 complex. Essential for establishing and maintaining the structure of mitochondria and maintenance of mtDNA nucleoids. In Neurospora crassa (strain ATCC 24698 / 74-OR23-1A / CBS 708.71 / DSM 1257 / FGSC 987), this protein is Maintenance of mitochondrial morphology protein 1 (mmm-1).